We begin with the raw amino-acid sequence, 230 residues long: NADH-quinone oxidoreductase subunit 9 (230 aa).

2 4Fe-4S ferredoxin-type domains span residues 60–93 (GRPV…MQAK) and 104–133 (AWFE…MSKE). 8 residues coordinate [4Fe-4S] cluster: Cys73, Cys76, Cys79, Cys83, Cys113, Cys116, Cys119, and Cys123.

Belongs to the complex I 23 kDa subunit family. NDH-1 is composed of 14 different subunits. Subunits Nqo7-14 constitute the membrane sector of the complex. Requires [4Fe-4S] cluster as cofactor.

It localises to the cell inner membrane. It carries out the reaction a quinone + NADH + 5 H(+)(in) = a quinol + NAD(+) + 4 H(+)(out). NDH-1 shuttles electrons from NADH, via FMN and iron-sulfur (Fe-S) centers, to quinones in the respiratory chain. The immediate electron acceptor for the enzyme in this species is believed to be menaquinone. Couples the redox reaction to proton translocation (for every two electrons transferred, four hydrogen ions are translocated across the cytoplasmic membrane), and thus conserves the redox energy in a proton gradient. The chain is NADH-quinone oxidoreductase subunit 9 (nqo9) from Rhodothermus marinus (Rhodothermus obamensis).